Reading from the N-terminus, the 151-residue chain is Secreted RxLR effector protein 30 (151 aa).

The first 19 residues, 1–19 (MRSSTILIVLGIAILAVNG), serve as a signal peptide directing secretion. A RxLR-dEER motif is present at residues 38-53 (RLLRSTSTEHETDEER).

It belongs to the RxLR effector family.

It localises to the secreted. The protein localises to the host nucleus. Functionally, effector that acts as a broad suppressor of cell death to interrupt plant immunity. Inhibits cell death induced by cell death-inducing proteins, including the PAMP elicitor INF1 from P.infestans. The chain is Secreted RxLR effector protein 30 from Plasmopara viticola (Downy mildew of grapevine).